The chain runs to 314 residues: HTH-type transcriptional regulator LeuO (314 aa).

The HTH lysR-type domain maps to 22-79 (VDLNLLTVFDAVMQEQNITRAAHVLGMSQPAVSNAVARLKVMFNDELFVRYGRGIQPT). A DNA-binding region (H-T-H motif) is located at residues 39 to 58 (ITRAAHVLGMSQPAVSNAVA).

Belongs to the LysR transcriptional regulatory family.

Functionally, a global transcription factor. Activates transcription of the 9 following operons; yjjQ-bglJ, yjjP, acrEF, ybdO, yjcRQP, casABCDE12, rhsD-ybbC, fepE and gltF, in most cases it probably interferes with silencing by H-NS and activates transcription. Represses transcription of the 3 following operons; uxaCA, sdaCB and btsT. H-NS repression of the bgl operon, leading to the ability to metabolize some beta-glucosides. It also directly activates the bgl operon. Activation is H-NS and BglJ-RcsB independent. The protein is HTH-type transcriptional regulator LeuO (leuO) of Escherichia coli (strain K12).